A 605-amino-acid chain; its full sequence is Elongation factor 4 (605 aa).

The tr-type G domain maps to 9 to 192 (HHIRNFCIIA…AIVKRVPAPS (184 aa)). Residues 21-26 (DHGKST) and 139-142 (NKID) contribute to the GTP site.

The protein belongs to the TRAFAC class translation factor GTPase superfamily. Classic translation factor GTPase family. LepA subfamily.

The protein localises to the cell inner membrane. The enzyme catalyses GTP + H2O = GDP + phosphate + H(+). Functionally, required for accurate and efficient protein synthesis under certain stress conditions. May act as a fidelity factor of the translation reaction, by catalyzing a one-codon backward translocation of tRNAs on improperly translocated ribosomes. Back-translocation proceeds from a post-translocation (POST) complex to a pre-translocation (PRE) complex, thus giving elongation factor G a second chance to translocate the tRNAs correctly. Binds to ribosomes in a GTP-dependent manner. This is Elongation factor 4 from Chlorobium phaeobacteroides (strain DSM 266 / SMG 266 / 2430).